Reading from the N-terminus, the 199-residue chain is Putative pseudouridine methyltransferase (199 aa).

S-adenosyl-L-methionine contacts are provided by Leu-132 and Cys-186.

The protein belongs to the methyltransferase superfamily. TrmY family.

The protein localises to the cytoplasm. In Vibrio parahaemolyticus serotype O3:K6 (strain RIMD 2210633), this protein is Putative pseudouridine methyltransferase.